The primary structure comprises 206 residues: Bis(5'-adenosyl)-triphosphatase (206 aa).

In terms of domain architecture, HIT spans 3–115 (KPIYFSKFLV…KINNVGDLIY (113 aa)). A Histidine triad motif motif is present at residues 96–100 (HLHTH). The active-site Tele-AMP-histidine intermediate is His98. Residues 143–164 (RQARKNNSTSATVDGDELSQGP) are disordered.

In terms of assembly, homodimer. The cofactor is Mn(2+).

Its subcellular location is the cytoplasm. The protein localises to the nucleus. It is found in the mitochondrion. It catalyses the reaction P(1),P(3)-bis(5'-adenosyl) triphosphate + H2O = AMP + ADP + 2 H(+). Its function is as follows. Cleaves A-5'-PPP-5'A to yield AMP and ADP. Can cleave all dinucleoside polyphosphates, provided the phosphate chain contains at least 3 phosphates and that 1 of the 2 bases composing the nucleotide is a purine. Is most effective on dinucleoside triphosphates. Negatively regulates intracellular dinucleoside polyphosphate levels, which elevate following heat shock. This is Bis(5'-adenosyl)-triphosphatase (HNT2) from Saccharomyces cerevisiae (strain RM11-1a) (Baker's yeast).